Reading from the N-terminus, the 105-residue chain is Large ribosomal subunit protein bL21 (105 aa).

The protein belongs to the bacterial ribosomal protein bL21 family. Part of the 50S ribosomal subunit. Contacts protein L20.

In terms of biological role, this protein binds to 23S rRNA in the presence of protein L20. This is Large ribosomal subunit protein bL21 from Blochmanniella pennsylvanica (strain BPEN).